Here is a 281-residue protein sequence, read N- to C-terminus: Shikimate dehydrogenase (NADP(+)) (281 aa).

Shikimate is bound by residues 19–21 (SFS) and Thr-66. The Proton acceptor role is filled by Lys-70. Residues Asn-91 and Asp-104 each coordinate shikimate. NADP(+)-binding positions include 127–131 (GAGGA) and Ile-223. Tyr-225 lines the shikimate pocket. Gly-246 is an NADP(+) binding site.

Belongs to the shikimate dehydrogenase family. Homodimer.

The enzyme catalyses shikimate + NADP(+) = 3-dehydroshikimate + NADPH + H(+). It functions in the pathway metabolic intermediate biosynthesis; chorismate biosynthesis; chorismate from D-erythrose 4-phosphate and phosphoenolpyruvate: step 4/7. In terms of biological role, involved in the biosynthesis of the chorismate, which leads to the biosynthesis of aromatic amino acids. Catalyzes the reversible NADPH linked reduction of 3-dehydroshikimate (DHSA) to yield shikimate (SA). The sequence is that of Shikimate dehydrogenase (NADP(+)) from Methanobrevibacter smithii (strain ATCC 35061 / DSM 861 / OCM 144 / PS).